The primary structure comprises 138 residues: Large ribosomal subunit protein uL16 (138 aa).

A compositionally biased stretch (basic residues) spans 1 to 13 (MLQPKRRKYRKEQ). A disordered region spans residues 1 to 24 (MLQPKRRKYRKEQKGRNTGKATRG).

It belongs to the universal ribosomal protein uL16 family. Part of the 50S ribosomal subunit.

Binds 23S rRNA and is also seen to make contacts with the A and possibly P site tRNAs. This Burkholderia ambifaria (strain ATCC BAA-244 / DSM 16087 / CCUG 44356 / LMG 19182 / AMMD) (Burkholderia cepacia (strain AMMD)) protein is Large ribosomal subunit protein uL16.